We begin with the raw amino-acid sequence, 309 residues long: Wnt inhibitor of Dorsal protein (309 aa).

A signal peptide spans 1-16 (MIFAITFFMGITSTLA). Cystine bridges form between cysteine 51–cysteine 62, cysteine 102–cysteine 110, cysteine 112–cysteine 121, cysteine 162–cysteine 179, cysteine 164–cysteine 174, cysteine 232–cysteine 269, cysteine 248–cysteine 262, cysteine 266–cysteine 308, cysteine 284–cysteine 299, and cysteine 286–cysteine 296.

The protein belongs to the Wnt family.

It localises to the secreted. Its subcellular location is the extracellular space. The protein resides in the extracellular matrix. In terms of biological role, binds as a ligand to a family of frizzled seven-transmembrane receptors and acts through a cascade of genes on the nucleus. The polypeptide is Wnt inhibitor of Dorsal protein (wntD) (Drosophila melanogaster (Fruit fly)).